The following is a 262-amino-acid chain: Small ribosomal subunit protein uS2 (262 aa).

Residues 240–262 (NLDEKEESQEAESTEENTTVESN) are disordered. Positions 243 to 254 (EKEESQEAESTE) are enriched in acidic residues.

Belongs to the universal ribosomal protein uS2 family.

This Staphylococcus haemolyticus (strain JCSC1435) protein is Small ribosomal subunit protein uS2.